A 396-amino-acid chain; its full sequence is MIISAASDYRAAAQRTLPPFLFHYIDGGAYAEYTLRRNVEDLSQVALRQRVLKNMSDLSLETTLFNETLPMPVALAPVGLCGMYARRGEVQAAAAADAKGIPFTLSTVSVCPIEEVAPTIQRPMWFQLYVLRDRGFMRNALERAKAAGCSTLVFTVDMPTPGARYRDAHSGMSGPNAAMLRYWQAVMHPKWAWDVGLNGRPHDLGNISAYLGKPTGLEDYIGWLANNFDPSISWKDLEWIREFWDGPMVIKGILDPEDARDAVRFGADGIVVSNHGGRQLDGVLSSARALPAIADAVKGDIAILADSGIRNGLDVVRMIALGADTVLLGRAYLYALATAGKAGVANLLDLIEKEMKVAMTLTGAKTISEISGDSLVQELGKSLPAALAPMSKGDAA.

Positions 1–380 (MIISAASDYR…SGDSLVQELG (380 aa)) constitute an FMN hydroxy acid dehydrogenase domain. Position 24 (Tyr-24) interacts with substrate. Ser-106 and Gln-127 together coordinate FMN. Substrate is bound at residue Tyr-129. Thr-155 lines the FMN pocket. Arg-164 provides a ligand contact to substrate. Lys-251 is an FMN binding site. His-275 functions as the Proton acceptor in the catalytic mechanism. Arg-278 serves as a coordination point for substrate. 306–330 (DSGIRNGLDVVRMIALGADTVLLGR) is an FMN binding site.

This sequence belongs to the FMN-dependent alpha-hydroxy acid dehydrogenase family. It depends on FMN as a cofactor.

The protein localises to the cell inner membrane. The catalysed reaction is (S)-lactate + A = pyruvate + AH2. Catalyzes the conversion of L-lactate to pyruvate. Is coupled to the respiratory chain. This chain is L-lactate dehydrogenase, found in Salmonella choleraesuis (strain SC-B67).